The primary structure comprises 255 residues: Indole-3-glycerol phosphate synthase (255 aa).

Belongs to the TrpC family.

The enzyme catalyses 1-(2-carboxyphenylamino)-1-deoxy-D-ribulose 5-phosphate + H(+) = (1S,2R)-1-C-(indol-3-yl)glycerol 3-phosphate + CO2 + H2O. Its pathway is amino-acid biosynthesis; L-tryptophan biosynthesis; L-tryptophan from chorismate: step 4/5. The chain is Indole-3-glycerol phosphate synthase from Streptococcus thermophilus (strain CNRZ 1066).